The sequence spans 686 residues: MARRSRGEDQDELHCQDTDSDVPEQRDGRCKVKWTQEEDEQLKMLVRHYGQNDWKFLASHFPNRSDQQCQYRWLRVLNPDLVKGPWTKEEDQKVIELVKKYGTKQWTLIAKHLKGRLGKQCRERWHNHLNPEVKKSSWTEEEDRIIFEAHKVLGNRWAEIAKLLPGRTDNAVKNHWNSTIKRKVDTGGFLNETKESQPLYLLVEVDDNESQSGTRAESQTIVPNWPVDISEIKEEDVSDEEVTGLQELPSELPAADLAEHNEEGTPDDVVPEDASASVASPYKWVVEAANYLCPTSVPALNEALDMIESDPDGWCDLTQFDLPEEPSAGSSSSSNSPVRQTPSKPTPSLPNVTEYRLDGHTISDLSKSRKGELIPISPHAEVSFGTPPSVLKRQKKRKISLSPVTENAPSTSLSFLDSCNSMTPKSTPVKTLPFSPSQFLNFWTKQDTLELENPSLTSTPVCSQKVIVTTPLHRDKTPLLQKNSAFVTPDQKYVVDNTPHTPTPFKNALEKYGPIRPLPQTPHLEEDLKEVLRSEAGIELIIEDDVKPHKQKRKQGLRRSPIKKVRKSLALDIVDEDMTQNMPALPKTICFKRTQPVNFLSRSLNLSSSNRKNDSGLLNRAFVQVQSEKMSYRKMPSHFRPPAPMTRAWKAVACGGTQDQLFMQEKARQFLGTLKQSHTSRTLILS.

A disordered region spans residues 1 to 28 (MARRSRGEDQDELHCQDTDSDVPEQRDG). HTH myb-type domains are found at residues 26–77 (RDGR…LRVL), 78–133 (NPDL…NPEV), and 134–184 (KKSS…KRKV). 3 consecutive DNA-binding regions (H-T-H motif) follow at residues 54-77 (WKFL…LRVL), 106-129 (WTLI…HNHL), and 157-180 (WAEI…NSTI). Disordered regions lie at residues 315–355 (CDLT…VTEY) and 493–512 (YVVD…LEKY). The span at 326 to 343 (PSAGSSSSSNSPVRQTPS) shows a compositional bias: low complexity.

As to quaternary structure, component of the DREAM complex. Expressed in hematopoietic and non hematopoietic cells.

The protein localises to the nucleus. Represses v-myb- and c-myb-mediated activation of the mim-1 gene, probably by competing with other myb proteins for binding sites. It is an inhibitory member of the myb family. The polypeptide is Myb-related protein B (MYBL2) (Gallus gallus (Chicken)).